A 131-amino-acid polypeptide reads, in one-letter code: Large ribosomal subunit protein bL12c (131 aa).

Residues 107-131 (QGVSKDDAEASKKQLEDAGAKVKIS) form a disordered region. Residues 110-131 (SKDDAEASKKQLEDAGAKVKIS) are compositionally biased toward basic and acidic residues.

This sequence belongs to the bacterial ribosomal protein bL12 family. As to quaternary structure, homodimer. Part of the ribosomal stalk of the 50S ribosomal subunit. Forms a multimeric L10(L12)X complex, where L10 forms an elongated spine to which 2 to 4 L12 dimers bind in a sequential fashion. Binds GTP-bound translation factors.

The protein localises to the plastid. It localises to the chloroplast. Functionally, forms part of the ribosomal stalk which helps the ribosome interact with GTP-bound translation factors. Is thus essential for accurate translation. The polypeptide is Large ribosomal subunit protein bL12c (Chlorella vulgaris (Green alga)).